We begin with the raw amino-acid sequence, 85 residues long: Small ribosomal subunit protein bS18 (85 aa).

The protein belongs to the bacterial ribosomal protein bS18 family. In terms of assembly, part of the 30S ribosomal subunit. Forms a tight heterodimer with protein bS6.

Binds as a heterodimer with protein bS6 to the central domain of the 16S rRNA, where it helps stabilize the platform of the 30S subunit. This chain is Small ribosomal subunit protein bS18, found in Solidesulfovibrio magneticus (strain ATCC 700980 / DSM 13731 / RS-1) (Desulfovibrio magneticus).